The primary structure comprises 147 residues: Myosin-ID light chain (147 aa).

EF-hand domains lie at 8-43 (EAQSEFKEGFALYDGNKDGKLEAAELANTLRWLGQN), 79-114 (FDEKEIIEAFQVFDKDGKGMIGASDLRHILTNLGER), and 115-147 (LPEEQVEEMLRQAVGSGDGAINYEPFVRNMLKK). Aspartate 21, asparagine 23, aspartate 25, lysine 27, and glutamate 32 together coordinate Ca(2+).

Myosin I is a dimer of a heavy and a light chain. Inability to self-assemble into filaments. Interacts with myoD. Does not interact with myoB or myoC.

The protein localises to the cytoplasm. Functions as the light chain for myosin-D. Has low affinity for calcium. This chain is Myosin-ID light chain (mlcD), found in Dictyostelium discoideum (Social amoeba).